The sequence spans 323 residues: tRNA dimethylallyltransferase (323 aa).

An ATP-binding site is contributed by 13–20 (GPTASGKT). 15–20 (TASGKT) contacts substrate. Interaction with substrate tRNA regions lie at residues 42–45 (DSAL), 166–170 (QRIQR), 251–256 (RCVGYR), and 284–291 (KRQITWLR).

It belongs to the IPP transferase family. In terms of assembly, monomer. It depends on Mg(2+) as a cofactor.

It carries out the reaction adenosine(37) in tRNA + dimethylallyl diphosphate = N(6)-dimethylallyladenosine(37) in tRNA + diphosphate. Its function is as follows. Catalyzes the transfer of a dimethylallyl group onto the adenine at position 37 in tRNAs that read codons beginning with uridine, leading to the formation of N6-(dimethylallyl)adenosine (i(6)A). This is tRNA dimethylallyltransferase from Acidovorax ebreus (strain TPSY) (Diaphorobacter sp. (strain TPSY)).